Reading from the N-terminus, the 190-residue chain is Elongation factor P (190 aa).

It belongs to the elongation factor P family.

It is found in the cytoplasm. It functions in the pathway protein biosynthesis; polypeptide chain elongation. Its function is as follows. Involved in peptide bond synthesis. Stimulates efficient translation and peptide-bond synthesis on native or reconstituted 70S ribosomes in vitro. Probably functions indirectly by altering the affinity of the ribosome for aminoacyl-tRNA, thus increasing their reactivity as acceptors for peptidyl transferase. The polypeptide is Elongation factor P (Bartonella bacilliformis (strain ATCC 35685 / KC583 / Herrer 020/F12,63)).